A 296-amino-acid polypeptide reads, in one-letter code: Nucleotide-binding protein SPT_1506 (296 aa).

Position 13-20 (13-20 (GMSGAGKT)) interacts with ATP. 63-66 (DMRS) lines the GTP pocket.

This sequence belongs to the RapZ-like family.

In terms of biological role, displays ATPase and GTPase activities. In Streptococcus pneumoniae (strain Taiwan19F-14), this protein is Nucleotide-binding protein SPT_1506.